We begin with the raw amino-acid sequence, 447 residues long: MIKIKKGLNLPIAGRPEQAVYDGPAITEVALLGEEYAGMRPSMKVKEGDAVKKGQVLFEDKKNPGVVFTAPASGKIAAIHRGEKRVLQSVVIAVEGNDEIEFERYAPEALANLSGEEVRRNLIQSGLWTALRTRPFSKIPAVDAEPFAIFVNAMDTNPLAADPTVIIKEAAEDFKRGLLVLSRLTERKIHVCKAAGADVPSENAANIETHEFGGPHPAGLSGTHIHFIEPVGANKTVWTINYQDVITIGRLFATGRLNTERVIALGGSQVNKPRLLRTVLGAKVSQITAGELVDTDNRVISGSVLNGAITQGAHDYLGRYHNQISVIEEGRSKELFGWVAPQPDKYSITRTTLGHFLKNKLFKFNTAVNGGDRAMVPIGTYERVMPLDILPTLLLRDLIVGDTDSAQALGCLELDEEDLALCSFVCPGKYEYGPLLRKVLETIEKEG.

The protein belongs to the NqrA family. Composed of six subunits; NqrA, NqrB, NqrC, NqrD, NqrE and NqrF.

It catalyses the reaction a ubiquinone + n Na(+)(in) + NADH + H(+) = a ubiquinol + n Na(+)(out) + NAD(+). NQR complex catalyzes the reduction of ubiquinone-1 to ubiquinol by two successive reactions, coupled with the transport of Na(+) ions from the cytoplasm to the periplasm. NqrA to NqrE are probably involved in the second step, the conversion of ubisemiquinone to ubiquinol. The chain is Na(+)-translocating NADH-quinone reductase subunit A from Neisseria meningitidis serogroup B (strain ATCC BAA-335 / MC58).